The sequence spans 89 residues: Small ribosomal subunit protein uS15 (89 aa).

The protein belongs to the universal ribosomal protein uS15 family. In terms of assembly, part of the 30S ribosomal subunit. Forms a bridge to the 50S subunit in the 70S ribosome, contacting the 23S rRNA.

In terms of biological role, one of the primary rRNA binding proteins, it binds directly to 16S rRNA where it helps nucleate assembly of the platform of the 30S subunit by binding and bridging several RNA helices of the 16S rRNA. Functionally, forms an intersubunit bridge (bridge B4) with the 23S rRNA of the 50S subunit in the ribosome. The sequence is that of Small ribosomal subunit protein uS15 from Corynebacterium urealyticum (strain ATCC 43042 / DSM 7109).